We begin with the raw amino-acid sequence, 433 residues long: Leucine-rich repeat extensin-like protein 7 (433 aa).

A signal peptide spans 1–21; the sequence is MRIYQPTLLIFTTVVLLSISA. Residue asparagine 71 is glycosylated (N-linked (GlcNAc...) asparagine). 9 LRR repeats span residues 98–122, 123–145, 146–170, 171–194, 196–217, 219–239, 241–265, 266–289, and 290–313; these read VKTV…LGLL, TDIA…GFSQ, LSLL…VIGL, PKLK…LFDK, LDAL…MGNS, VSVL…SFGK, GKTL…MGLL, QNVT…MGQM, and ENLE…LCSL. An N-linked (GlcNAc...) asparagine glycan is attached at asparagine 267. Asparagine 340 carries N-linked (GlcNAc...) asparagine glycosylation. Positions 380-433 are disordered; that stretch reads FSPPPSQISPSSQPLAPAPSPTSPPLSTPPPARPCPPVYSPPPPPPLSLAPSMN. The segment at 381–433 is contains the Ser-Pro(4) repeats; it reads SPPPSQISPSSQPLAPAPSPTSPPLSTPPPARPCPPVYSPPPPPPLSLAPSMN. Over residues 395 to 427 the composition is skewed to pro residues; that stretch reads APAPSPTSPPLSTPPPARPCPPVYSPPPPPPLS.

In terms of processing, hydroxylated on proline residues in the S-P-P-P-P repeat. Post-translationally, O-glycosylated on hydroxyprolines. Expressed in flowers and pollen.

It localises to the secreted. The protein localises to the cell wall. In terms of biological role, modulates cell morphogenesis by regulating cell wall formation and assembly, and/or growth polarization. This chain is Leucine-rich repeat extensin-like protein 7 (LRX7), found in Arabidopsis thaliana (Mouse-ear cress).